The sequence spans 382 residues: Galactokinase (382 aa).

34 to 37 serves as a coordination point for substrate; the sequence is EHTD. An ATP-binding site is contributed by 124-130; sequence GAGLSSS. Mg(2+) is bound by residues Ser-130 and Glu-162. Catalysis depends on Asp-174, which acts as the Proton acceptor. Tyr-223 is a binding site for substrate.

It belongs to the GHMP kinase family. GalK subfamily.

It localises to the cytoplasm. The enzyme catalyses alpha-D-galactose + ATP = alpha-D-galactose 1-phosphate + ADP + H(+). It functions in the pathway carbohydrate metabolism; galactose metabolism. Its function is as follows. Catalyzes the transfer of the gamma-phosphate of ATP to D-galactose to form alpha-D-galactose-1-phosphate (Gal-1-P). The chain is Galactokinase from Escherichia coli O127:H6 (strain E2348/69 / EPEC).